The following is a 425-amino-acid chain: Serine--tRNA ligase (425 aa).

230-232 (TAE) is a binding site for L-serine. Position 261 to 263 (261 to 263 (RSE)) interacts with ATP. L-serine is bound at residue E284. An ATP-binding site is contributed by 348–351 (EISS). Residue S384 participates in L-serine binding.

Belongs to the class-II aminoacyl-tRNA synthetase family. Type-1 seryl-tRNA synthetase subfamily. As to quaternary structure, homodimer. The tRNA molecule binds across the dimer.

It localises to the cytoplasm. It catalyses the reaction tRNA(Ser) + L-serine + ATP = L-seryl-tRNA(Ser) + AMP + diphosphate + H(+). The catalysed reaction is tRNA(Sec) + L-serine + ATP = L-seryl-tRNA(Sec) + AMP + diphosphate + H(+). Its pathway is aminoacyl-tRNA biosynthesis; selenocysteinyl-tRNA(Sec) biosynthesis; L-seryl-tRNA(Sec) from L-serine and tRNA(Sec): step 1/1. Its function is as follows. Catalyzes the attachment of serine to tRNA(Ser). Is also able to aminoacylate tRNA(Sec) with serine, to form the misacylated tRNA L-seryl-tRNA(Sec), which will be further converted into selenocysteinyl-tRNA(Sec). In Maridesulfovibrio salexigens (strain ATCC 14822 / DSM 2638 / NCIMB 8403 / VKM B-1763) (Desulfovibrio salexigens), this protein is Serine--tRNA ligase.